The primary structure comprises 1050 residues: TSC22 domain family protein 1 (1050 aa).

A required for interaction with TGFBR1 and promotion of TGF-beta signaling region spans residues 1 to 99 (MHQPPESTAA…SQAQLQGQPL (99 aa)). 8 disordered regions span residues 22-111 (MAHP…KKSG), 126-285 (ISSN…VSSA), 445-479 (QTPT…SVGS), 511-531 (DFSS…VQLQ), 581-609 (LAQP…QLQY), 720-740 (VQPP…PPSS), 795-847 (QLPT…GSLV), and 879-919 (SLAQ…VSDG). Residues 38-55 (ASALSAAGTGVSGAAPSS) show a composition bias toward low complexity. Positions 58–71 (FPPPSSLLQPPPPA) are enriched in pro residues. Low complexity predominate over residues 85 to 97 (SLNLLSQAQLQGQ). The span at 134 to 143 (EDTESYDDLD) shows a compositional bias: acidic residues. Residues 217 to 241 (HPHHLHHHHHIHHGHHLHHGHHHSS) are compositionally biased toward basic residues. Phosphoserine is present on Ser265. The segment covering 458–476 (TSGSSVSSSVSTLSHYTES) has biased composition (low complexity). Residues 586 to 603 (LPYPQPAPPVQTPLPGAP) are compositionally biased toward pro residues. The segment covering 906 to 919 (LSGDSGGVSAVSDG) has biased composition (low complexity). Positions 983-1004 (LKEQIKELIEKNSQLEQENNLL) are leucine-zipper. Positions 1015-1050 (QFQAQLQTGSPPATTQPQGTTQPPAQPASQGSGSTA) are disordered. Residues 1021-1050 (QTGSPPATTQPQGTTQPPAQPASQGSGSTA) show a composition bias toward low complexity.

This sequence belongs to the TSC-22/Dip/Bun family. In terms of assembly, forms homodimers. Forms heterodimers. Component of a complex composed of TSC22D1 (via N-terminus), TGFBR1 and TGFBR2; the interaction between TSC22D1 and TGFBR1 is inhibited by SMAD7 and promoted by TGFB1. Interacts with SMAD7; the interaction requires TGF-beta and the interaction is inhibited by TGFBR1. Interacts with TPT1/fortilin; interaction results in the destabilization of TSC22D1 protein and prevents TSC22D1-mediated apoptosis. Interacts with SMAD4 (via N-terminus). Interacts with ACVRL1/ALK1, ACVR1/ALK2, BMPR1A/ALK3, ACVR1B/ALK4, BMPR1B/ALK6, ACVR2A/ACTRII, and BMPR2. Interacts with SMAD6. Interacts with TFE3; the interaction is enhanced in the presence of TGF-beta. As to quaternary structure, forms a heterodimer with TSC22D4/THG1. Forms a heterodimer with TSC22D4/THG1. Interacts with histone H1-2. Interacts with GNL3. As to expression, ubiquitously expressed, abundantly expressed in testis, ovary, uterus, and lung. Expressed in cardiomyocytes.

The protein localises to the cytoplasm. It localises to the nucleus. Its subcellular location is the cell membrane. The protein resides in the mitochondrion. In terms of biological role, transcriptional repressor. Acts on the C-type natriuretic peptide (CNP) promoter. Acts to promote CASP3-mediated apoptosis. Positively regulates TGF-beta signaling by interacting with SMAD7 which inhibits binding of SMAD7 to TGFBR1, preventing recruitment of SMURF ubiquitin ligases to TGFBR1 and inhibiting SMURF-mediated ubiquitination and degradation of TGFBR1. Contributes to enhancement of TGF-beta signaling by binding to and modulating the transcription activator activity of SMAD4. Promotes TGF-beta-induced transcription of COL1A2; via its interaction with TFE3 at E-boxes in the gene proximal promoter. Plays a role in the repression of hematopoietic precursor cell growth. Promotes IL2 deprivation-induced apoptosis in T-lymphocytes, via repression of TSC22D3/GILZ transcription and activation of the caspase cascade. May act to negatively regulate TGFB3 signaling and thereby inhibit cell death in mammary gland cells. Its function is as follows. Positively regulates cell death in response to TGFB3 during mammary gland involution. The polypeptide is TSC22 domain family protein 1 (Rattus norvegicus (Rat)).